The chain runs to 265 residues: Adenosylcobinamide-GDP ribazoletransferase (265 aa).

The next 4 helical transmembrane spans lie at 51-71, 72-92, 121-140, and 203-223; these read LVGV…QLIF, PDSV…GAFH, IGTY…FVLW, and VASL…LFAF.

Belongs to the CobS family. Requires Mg(2+) as cofactor.

The protein resides in the cell inner membrane. It carries out the reaction alpha-ribazole + adenosylcob(III)inamide-GDP = adenosylcob(III)alamin + GMP + H(+). The catalysed reaction is alpha-ribazole 5'-phosphate + adenosylcob(III)inamide-GDP = adenosylcob(III)alamin 5'-phosphate + GMP + H(+). Its pathway is cofactor biosynthesis; adenosylcobalamin biosynthesis; adenosylcobalamin from cob(II)yrinate a,c-diamide: step 7/7. Functionally, joins adenosylcobinamide-GDP and alpha-ribazole to generate adenosylcobalamin (Ado-cobalamin). Also synthesizes adenosylcobalamin 5'-phosphate from adenosylcobinamide-GDP and alpha-ribazole 5'-phosphate. The sequence is that of Adenosylcobinamide-GDP ribazoletransferase from Vibrio parahaemolyticus serotype O3:K6 (strain RIMD 2210633).